We begin with the raw amino-acid sequence, 125 residues long: Glycine cleavage system H protein (125 aa).

The Lipoyl-binding domain maps to 23–104; it reads VVYIGITDYA…PYENWILKVK (82 aa). Lys-64 bears the N6-lipoyllysine mark.

The protein belongs to the GcvH family. As to quaternary structure, the glycine cleavage system is composed of four proteins: P, T, L and H. (R)-lipoate is required as a cofactor.

Functionally, the glycine cleavage system catalyzes the degradation of glycine. The H protein shuttles the methylamine group of glycine from the P protein to the T protein. This Clostridioides difficile (strain 630) (Peptoclostridium difficile) protein is Glycine cleavage system H protein.